We begin with the raw amino-acid sequence, 469 residues long: Programmed cell death protein 4 (469 aa).

Methionine 1 bears the N-acetylmethionine mark. Disordered regions lie at residues 1-38 (MDVE…EIKN) and 58-128 (KAKR…GTPG). At serine 25 the chain carries Phosphoserine. The Nuclear localization signal signature appears at 58–64 (KAKRRLR). Position 67 is a phosphoserine; by PKB and RPS6KB1 (serine 67). Phosphoserine occurs at positions 68, 71, 76, 78, 80, and 94. The short motif at 70–76 (DSGRGDS) is the Phosphodegron element. Positions 74 to 83 (GDSVSDSGSD) are enriched in low complexity. Gly residues predominate over residues 114–125 (KKGGAGGKGVWG). Tyrosine 152 bears the Phosphotyrosine mark. The MI 1 domain occupies 163-284 (AFEKTLTPII…CNTYIDSYKG (122 aa)). Positions 241–250 (DKLLKDLPEL) match the Nuclear localization signal motif. 2 positions are modified to phosphoserine: serine 313 and serine 317. The region spanning 326–449 (HLVKEIDMLL…SKQLRDLCPS (124 aa)) is the MI 2 domain. Residue serine 457 is modified to Phosphoserine; by PKB.

Belongs to the PDCD4 family. In terms of assembly, interacts (via MI domains) with EIF4A2. Interacts (via MI domains) with EIF4A1 (via N-terminal domain). Heterotrimer with EIF4A1; one molecule of PDCD4 binds two molecules of EIF4A1. Interacts with EIF4G1. May form a complex with EIF4A1 and EIF4G1. The interaction between PDCD4 and EIF4A1 interferes with the interaction between EIF4A1 and EIF4G. When phosphorylated, interacts with BTRC and FBXW11. In terms of processing, polyubiquitinated, leading to its proteasomal degradation. Rapidly degraded in response to mitogens. Phosphorylation of the phosphodegron promotes interaction with BTRC and proteasomal degradation. Post-translationally, phosphorylated at Ser-67 by RPS6KB1 in response to mitogens; phosphorylation promotes proteasomal degradation of PDCD4. Up-regulated in proliferative cells. Highly expressed in epithelial cells of the mammary gland. Reduced expression in lung cancer and colon carcinoma.

The protein localises to the nucleus. The protein resides in the cytoplasm. In terms of biological role, inhibits translation initiation and cap-dependent translation. May excert its function by hindering the interaction between EIF4A1 and EIF4G. Inhibits the helicase activity of EIF4A. Modulates the activation of JUN kinase. Down-regulates the expression of MAP4K1, thus inhibiting events important in driving invasion, namely, MAPK85 activation and consequent JUN-dependent transcription. May play a role in apoptosis. Tumor suppressor. Inhibits tumor promoter-induced neoplastic transformation. Binds RNA. In Homo sapiens (Human), this protein is Programmed cell death protein 4 (PDCD4).